The sequence spans 246 residues: Ubiquinone biosynthesis O-methyltransferase (246 aa).

Positions 44, 63, 84, and 128 each coordinate S-adenosyl-L-methionine.

It belongs to the methyltransferase superfamily. UbiG/COQ3 family.

The catalysed reaction is a 3-demethylubiquinol + S-adenosyl-L-methionine = a ubiquinol + S-adenosyl-L-homocysteine + H(+). It carries out the reaction a 3-(all-trans-polyprenyl)benzene-1,2-diol + S-adenosyl-L-methionine = a 2-methoxy-6-(all-trans-polyprenyl)phenol + S-adenosyl-L-homocysteine + H(+). The protein operates within cofactor biosynthesis; ubiquinone biosynthesis. Its function is as follows. O-methyltransferase that catalyzes the 2 O-methylation steps in the ubiquinone biosynthetic pathway. This is Ubiquinone biosynthesis O-methyltransferase from Xylella fastidiosa (strain 9a5c).